The primary structure comprises 294 residues: Non-selective voltage-gated ion channel VDAC2 (294 aa).

N-acetylalanine is present on Ala2. Residues Lys23 and Lys31 each coordinate ATP. The residue at position 31 (Lys31) is an N6-acetyllysine; alternate. An N6-succinyllysine; alternate modification is found at Lys31. A Glycyl lysine isopeptide (Lys-Gly) (interchain with G-Cter in ubiquitin); alternate cross-link involves residue Lys31. The next 2 beta stranded transmembrane spans lie at 37–46 (LVKLDVKTKS) and 50–58 (VEFSTSGSS). A Glycyl lysine isopeptide (Lys-Gly) (interchain with G-Cter in ubiquitin) cross-link involves residue Lys64. Residues 65–75 (VTGTLETKYKW) form a beta stranded membrane-spanning segment. Position 78 is a phosphotyrosine (Tyr78). Transmembrane regions (beta stranded) follow at residues 80-87 (LTFTEKWN), 91-100 (TLGTEIAIED), and 106-115 (LKLTFDTTFS). The residue at position 118 (Thr118) is a Phosphothreonine. Position 120 is an N6-acetyllysine; alternate (Lys120). A Glycyl lysine isopeptide (Lys-Gly) (interchain with G-Cter in ubiquitin); alternate cross-link involves residue Lys120. Lys121 participates in a covalent cross-link: Glycyl lysine isopeptide (Lys-Gly) (interchain with G-Cter in ubiquitin). A run of 4 beta stranded transmembrane segments spans residues 122–131 (SGKIKSSYKR), 134–141 (VNLGCDVD), 148–156 (AIHGSAVFG), and 161–169 (LAGYQMTFD). Lys172 is covalently cross-linked (Glycyl lysine isopeptide (Lys-Gly) (interchain with G-Cter in ubiquitin)). Transmembrane regions (beta stranded) follow at residues 174–186 (KLTR…GYRT), 189–196 (FQLHTNVN), 200–209 (EFGGSIYQKV), 213–222 (LDTSVNLAWT), 229–238 (RFGIAAKYQL), and 242–249 (ASISAKVN). The residue at position 251 (Ser251) is a Phosphoserine. NAD(+) is bound by residues 253–255 (LIG) and 271–275 (SALVD). 2 beta stranded membrane-spanning segments follow: residues 253-262 (LIGVGYTQTL) and 265-274 (GVKLTLSALV). Lys277 carries the N6-acetyllysine; alternate modification. A Glycyl lysine isopeptide (Lys-Gly) (interchain with G-Cter in ubiquitin); alternate cross-link involves residue Lys277. Residues 284 to 293 (HKLGLALELE) traverse the membrane as a beta stranded segment.

The protein belongs to the eukaryotic mitochondrial porin family. In terms of assembly, monomer, homodimer and higher order oligomers; formation of higher order structures is necessary for scramblase activity. Interacts with ARMC12 in a TBC1D21-dependent manner. Interacts with KLC3. Interacts with SPATA33. Interacts with PPP3CC in a SPATA33-dependent manner. Ubiquitinated by PRKN during mitophagy, leading to its degradation and enhancement of mitophagy. Deubiquitinated by USP30.

It is found in the mitochondrion outer membrane. The protein localises to the membrane. It catalyses the reaction chloride(in) = chloride(out). The catalysed reaction is K(+)(in) = K(+)(out). The enzyme catalyses a 1,2-diacyl-sn-glycero-3-phospho-L-serine(in) = a 1,2-diacyl-sn-glycero-3-phospho-L-serine(out). It carries out the reaction a 1,2-diacyl-sn-glycero-3-phosphocholine(in) = a 1,2-diacyl-sn-glycero-3-phosphocholine(out). It catalyses the reaction a 1,2-diacyl-sn-glycero-3-phospho-(1D-myo-inositol)(in) = a 1,2-diacyl-sn-glycero-3-phospho-(1D-myo-inositol)(out). In terms of biological role, non-selective voltage-gated ion channel that mediates the transport of anions and cations through the mitochondrion outer membrane and plasma membrane. The channel adopts an open conformation at zero mV and a closed conformation at both positive and negative potentials. There are two populations of channels; the main that functions in a lower open-state conductance with lower ion selectivity, that switch, in a voltage-dependent manner, from the open to a low-conducting 'closed' state and the other that has a normal ion selectivity in the typical high conductance, 'open' state. Binds various lipids, including the sphingolipid ceramide, the phospholipid phosphatidylcholine, and the sterols cholesterol and oxysterol. Binding of ceramide promotes the mitochondrial outer membrane permeabilization (MOMP) apoptotic pathway. Functionally, catalyzes the scrambling of phospholipids across the outer mitochondrial membrane; the mechanism is unrelated to channel activity and is capable of translocating both anionic and zwitterionic phospholipids. The protein is Non-selective voltage-gated ion channel VDAC2 of Sus scrofa (Pig).